The chain runs to 139 residues: Hydrogenase maturation factor HypA (139 aa).

Residues Met-1 and His-2 each contribute to the Ni(2+) site. Zn(2+)-binding residues include Cys-73 and Cys-76. His-98 is a binding site for Ni(2+). Zn(2+) contacts are provided by Cys-110 and Cys-113.

This sequence belongs to the HypA/HybF family. Monomer and homodimer. Could also form hexamers. Forms a complex with HypB.

In terms of biological role, involved in the maturation of [NiFe] hydrogenases. Required for nickel insertion into the metal center of the hydrogenase. The sequence is that of Hydrogenase maturation factor HypA from Thermococcus kodakarensis (strain ATCC BAA-918 / JCM 12380 / KOD1) (Pyrococcus kodakaraensis (strain KOD1)).